Reading from the N-terminus, the 137-residue chain is Large ribosomal subunit protein uL24 (137 aa).

Belongs to the universal ribosomal protein uL24 family. Part of the 50S ribosomal subunit.

One of two assembly initiator proteins, it binds directly to the 5'-end of the 23S rRNA, where it nucleates assembly of the 50S subunit. Functionally, located at the polypeptide exit tunnel on the outside of the subunit. In Sulfurisphaera tokodaii (strain DSM 16993 / JCM 10545 / NBRC 100140 / 7) (Sulfolobus tokodaii), this protein is Large ribosomal subunit protein uL24.